The following is a 408-amino-acid chain: Indian hedgehog protein (408 aa).

The first 23 residues, 1-23 (MKPARLLLLLSGCALLLAPAVRC), serve as a signal peptide directing secretion. C24 carries the N-palmitoyl cysteine lipid modification. 7 residues coordinate Ca(2+): E90, E91, D96, T126, E127, D130, and D132. Zn(2+)-binding residues include H141, D148, and H183. G198 carries the Cholesterol glycine ester lipid modification.

It belongs to the hedgehog family. Multimer. As to quaternary structure, interacts with BOC and CDON. Interacts with PTCH1. Interacts with glypican GPC3. Post-translationally, cholesterylation is required for N-product targeting to lipid rafts and multimerization. In terms of processing, the C-terminal domain displays an autoproteolysis activity and a cholesterol transferase activity. Both activities result in the cleavage of the full-length protein and covalent attachment of a cholesterol moiety to the C-terminal of the newly generated N-product. The N-product is the active species in both local and long-range signaling, whereas the C-product is degraded in the endoplasmic reticulum. N-palmitoylation by HHAT of N-product is required for indian hedgehog protein N-product multimerization and full activity. Expressed in developing midgut, lung and cartilage of developing long bones in the limb.

Its subcellular location is the cell membrane. It localises to the endoplasmic reticulum membrane. The protein resides in the golgi apparatus membrane. It is found in the secreted. The enzyme catalyses glycyl-L-cysteinyl-[protein] + cholesterol + H(+) = [protein]-C-terminal glycyl cholesterol ester + N-terminal L-cysteinyl-[protein]. Its function is as follows. Plays a role in embryonic morphogenesis; it is involved in the regulation of endochondral skeleton formation, and the development of retinal pigment epithelium (RPE), photoreceptors and periocular tissues. The C-terminal part of the indian hedgehog protein precursor displays an autoproteolysis and a cholesterol transferase activity. Both activities result in the cleavage of the full-length protein into two parts followed by the covalent attachment of a cholesterol moiety to the C-terminal of the newly generated N-product. Both activities occur in the endoplasmic reticulum. Functionally, the dually lipidated indian hedgehog protein N-product is a morphogen which is essential for a variety of patterning events during development. Binds to the patched (PTCH1) receptor, which functions in association with smoothened (SMO), to activate the transcription of target genes. Plays a role in morphogenesis of the skeleton by coordinating growth and differentiation of the endochondral skeleton. Positively regulates PTHLH expression during endochondral bone formation preventing chondrocyte hypertrophy. In contrast, participates in normal chondrocyte proliferation in a PTHLH-independent pathway. This is Indian hedgehog protein from Gallus gallus (Chicken).